The following is a 507-amino-acid chain: Alkyl hydroperoxide reductase subunit F (507 aa).

Asp207–Ile222 serves as a coordination point for FAD. Cysteines 335 and 338 form a disulfide. Residue Asp347 to Ala361 coordinates NAD(+). Thr467 to Asp477 provides a ligand contact to FAD.

This sequence belongs to the class-II pyridine nucleotide-disulfide oxidoreductase family. Homodimer. The cofactor is FAD.

Its function is as follows. Serves to protect the cell against DNA damage by alkyl hydroperoxides. It can use either NADH or NADPH as electron donor for direct reduction of redox dyes or of alkyl hydroperoxides when combined with the AhpC protein. The sequence is that of Alkyl hydroperoxide reductase subunit F (ahpF) from Staphylococcus aureus (strain Mu50 / ATCC 700699).